A 196-amino-acid polypeptide reads, in one-letter code: Carnitine operon protein CaiE (196 aa).

The tract at residues 173–196 (TQPLRQMEENRPRLQGTTDVTPKR) is disordered. Over residues 187-196 (QGTTDVTPKR) the composition is skewed to polar residues.

Belongs to the transferase hexapeptide repeat family.

It participates in amine and polyamine metabolism; carnitine metabolism. Functionally, overproduction of CaiE stimulates the activity of CaiB and CaiD. The sequence is that of Carnitine operon protein CaiE from Shigella dysenteriae serotype 1 (strain Sd197).